Here is a 589-residue protein sequence, read N- to C-terminus: Vesicular glutamate transporter 3 (589 aa).

At 1–76 (MPFKAFDTFK…CHCCGLPKRY (76 aa)) the chain is on the cytoplasmic side. The span at 40-49 (TEEEDNIELN) shows a compositional bias: acidic residues. The segment at 40–61 (TEEEDNIELNEEGRPVQTSRPS) is disordered. The chain crosses the membrane as a helical span at residues 77–97 (IIAIMSGLGFCISFGIRCNLG). The Vesicular portion of the chain corresponds to 98-130 (VAIVEMVNNSTVYVDGKPEIQTAQFNWDPETVG). Asn-106 carries an N-linked (GlcNAc...) asparagine glycan. The chain crosses the membrane as a helical span at residues 131–151 (LIHGSFFWGYIMTQIPGGFIS). At 152 to 153 (NK) the chain is on the cytoplasmic side. The helical transmembrane segment at 154 to 174 (FAANRVFGAAIFLTSTLNMFI) threads the bilayer. The Vesicular portion of the chain corresponds to 175–182 (PSAARVHY). A helical membrane pass occupies residues 183–203 (GCVMCVRILQGLVEGVTYPAC). Residues 204–221 (HGMWSKWAPPLERSRLAT) are Cytoplasmic-facing. Residues 222–242 (TSFCGSYAGAVVAMPLAGVLV) traverse the membrane as a helical segment. The Vesicular segment spans residues 243–249 (QYIGWSS). A helical membrane pass occupies residues 250 to 270 (VFYIYGMFGIIWYMFWLLQAY). Residues 271-314 (ECPAAHPTISNEEKTYIETSIGEGANVVSLSKFSTPWKRFFTSL) are Cytoplasmic-facing. Residues 315–335 (PVYAIIVANFCRSWTFYLLLI) traverse the membrane as a helical segment. At 336-353 (SQPAYFEEVFGFAISKVG) the chain is on the vesicular side. Residues 354-374 (LLSAVPHMVMTIVVPIGGQLA) form a helical membrane-spanning segment. The Cytoplasmic portion of the chain corresponds to 375–390 (DYLRSRQILTTTAVRK). Residues 391–411 (IMNCGGFGMEATLLLVVGFSH) form a helical membrane-spanning segment. Residues 412-413 (TK) are Vesicular-facing. The helical transmembrane segment at 414–434 (GVAISFLVLAVGFSGFAISGF) threads the bilayer. Topologically, residues 435-447 (NVNHLDIAPRYAS) are cytoplasmic. The chain crosses the membrane as a helical span at residues 448-468 (ILMGISNGVGTLSGMVCPLIV). Over 469–481 (GAMTRHKTREEWQ) the chain is Vesicular. The helical transmembrane segment at 482–502 (NVFLIAALVHYSGVIFYGVFA) threads the bilayer. Residues 503–586 (SGEKQEWADP…SYQNEERNFS (84 aa)) lie on the Cytoplasmic side of the membrane. Positions 559–589 (KKEWKGQRGATLDEEELTSYQNEERNFSTIS) are disordered. Basic and acidic residues predominate over residues 580–589 (NEERNFSTIS).

It belongs to the major facilitator superfamily. Sodium/anion cotransporter family. VGLUT subfamily. Expressed in amygdala, cerebellum, hippocampus, medulla, spinal cord and thalamus.

It is found in the cytoplasmic vesicle. Its subcellular location is the secretory vesicle. The protein resides in the synaptic vesicle membrane. It localises to the cell membrane. The protein localises to the synapse. It is found in the synaptosome. It catalyses the reaction L-glutamate(out) = L-glutamate(in). The catalysed reaction is 3 Na(+)(out) + phosphate(out) = 3 Na(+)(in) + phosphate(in). The enzyme catalyses chloride(in) = chloride(out). The L-glutamate uniporter activity exhibits a biphasic dependence on chloride concentration. Chloride channel activity is allosterically activated by lumenal H(+) and Cl(-) leading to synaptic vesicles acidification. The glutamate transport activity is allosterically activated by lumenal H(+) and Cl(-), preventing non-vesicular L-glutamate release. Its function is as follows. Multifunctional transporter that transports L-glutamate as well as multiple ions such as chloride, sodium and phosphate. At the synaptic vesicle membrane, mainly functions as an uniporter that mediates the uptake of L-glutamate into synaptic vesicles at presynaptic nerve terminals of excitatory neural cells. The L-glutamate uniporter activity is electrogenic and is driven by the proton electrochemical gradient, mainly by the electrical gradient established by the vacuolar H(+)-ATPase across the synaptic vesicle membrane. In addition, functions as a chloride channel that allows a chloride permeation through the synaptic vesicle membrane that affects the proton electrochemical gradient and promotes synaptic vesicles acidification. At the plasma membrane, following exocytosis, functions as a symporter of Na(+) and phosphate from the extracellular space to the cytoplasm allowing synaptic phosphate homeostasis regulation. The symporter activity is electrogenic. Moreover, operates synergistically with SLC18A3/VACHT under a constant H(+) gradient, thereby allowing striatal vesicular acetylcholine uptake. The protein is Vesicular glutamate transporter 3 of Homo sapiens (Human).